A 432-amino-acid polypeptide reads, in one-letter code: Lipoyl synthase, mitochondrial (432 aa).

Residues 32–68 (TLGATPGSTSTSTSTSTATTTTLESTSTSTSGDATET) are compositionally biased toward low complexity. The interval 32–71 (TLGATPGSTSTSTSTSTATTTTLESTSTSTSGDATETTIK) is disordered. The [4Fe-4S] cluster site is built by Cys-150, Cys-155, Cys-161, Cys-180, Cys-184, Cys-187, and Ser-395. The region spanning 165 to 384 (KKSEATATIM…RDVALEMGFL (220 aa)) is the Radical SAM core domain.

It belongs to the radical SAM superfamily. Lipoyl synthase family. [4Fe-4S] cluster is required as a cofactor.

It is found in the mitochondrion. The enzyme catalyses [[Fe-S] cluster scaffold protein carrying a second [4Fe-4S](2+) cluster] + N(6)-octanoyl-L-lysyl-[protein] + 2 oxidized [2Fe-2S]-[ferredoxin] + 2 S-adenosyl-L-methionine + 4 H(+) = [[Fe-S] cluster scaffold protein] + N(6)-[(R)-dihydrolipoyl]-L-lysyl-[protein] + 4 Fe(3+) + 2 hydrogen sulfide + 2 5'-deoxyadenosine + 2 L-methionine + 2 reduced [2Fe-2S]-[ferredoxin]. Its pathway is protein modification; protein lipoylation via endogenous pathway; protein N(6)-(lipoyl)lysine from octanoyl-[acyl-carrier-protein]: step 2/2. In terms of biological role, catalyzes the radical-mediated insertion of two sulfur atoms into the C-6 and C-8 positions of the octanoyl moiety bound to the lipoyl domains of lipoate-dependent enzymes, thereby converting the octanoylated domains into lipoylated derivatives. The protein is Lipoyl synthase, mitochondrial of Lodderomyces elongisporus (strain ATCC 11503 / CBS 2605 / JCM 1781 / NBRC 1676 / NRRL YB-4239) (Yeast).